Consider the following 78-residue polypeptide: Translational regulator CsrA (78 aa).

This sequence belongs to the CsrA/RsmA family. In terms of assembly, homodimer; the beta-strands of each monomer intercalate to form a hydrophobic core, while the alpha-helices form wings that extend away from the core.

Its subcellular location is the cytoplasm. A translational regulator that binds mRNA to regulate translation initiation and/or mRNA stability. Usually binds in the 5'-UTR at or near the Shine-Dalgarno sequence preventing ribosome-binding, thus repressing translation. Its main target seems to be the major flagellin gene, while its function is anatagonized by FliW. This Borrelia turicatae (strain 91E135) protein is Translational regulator CsrA.